Here is a 157-residue protein sequence, read N- to C-terminus: Ribosome maturation factor RimP (157 aa).

Belongs to the RimP family.

It localises to the cytoplasm. Functionally, required for maturation of 30S ribosomal subunits. The protein is Ribosome maturation factor RimP of Bacillus pumilus (strain SAFR-032).